The chain runs to 251 residues: Putative cysteine-rich repeat secretory protein 36 (251 aa).

The N-terminal stretch at 1–28 (MHSSYSLSKCLVCFTILAIQTLIRRVSS) is a signal peptide. 2 Gnk2-homologous domains span residues 35–139 (YLNH…NSPP) and 144–248 (YENT…LYPF).

It belongs to the cysteine-rich repeat secretory protein family.

It is found in the secreted. The polypeptide is Putative cysteine-rich repeat secretory protein 36 (CRRSP36) (Arabidopsis thaliana (Mouse-ear cress)).